The sequence spans 293 residues: Heterogeneous nuclear ribonucleoprotein C-like 1 (293 aa).

In terms of domain architecture, RRM spans 16 to 87 (SRVFIGNLNT…QVVDINLAAE (72 aa)). Disordered stretches follow at residues 137 to 177 (ALAV…KLKG) and 206 to 293 (KEQS…QDDS). Positions 177-225 (GDDLQAIKQELTQIKQKVDSLLENLEKIEKEQSKQEVEVKNAKSEEEQS) form a coiled coil. Composition is skewed to basic and acidic residues over residues 206 to 222 (KEQS…KSEE) and 229 to 240 (MKKDETHVKMES). Composition is skewed to acidic residues over residues 242–267 (GGAE…DDQL) and 275–284 (KEAEEGEDDR).

Belongs to the RRM HNRPC family. RALY subfamily.

The protein localises to the nucleus. In terms of biological role, may play a role in nucleosome assembly by neutralizing basic proteins such as A and B core hnRNPs. In Homo sapiens (Human), this protein is Heterogeneous nuclear ribonucleoprotein C-like 1 (HNRNPCL1).